We begin with the raw amino-acid sequence, 244 residues long: Transcriptional regulatory protein AruR (244 aa).

One can recognise a Response regulatory domain in the interval arginine 6 to isoleucine 124. A 4-aspartylphosphate modification is found at aspartate 60. Positions glutamine 139–alanine 239 form a DNA-binding region, ompR/PhoB-type.

Post-translationally, phosphorylated by AruS.

It localises to the cytoplasm. It participates in amino-acid degradation; L-arginine degradation [regulation]. Functionally, member of the two-component regulatory system AruS/AruR, which is involved in the regulation of the arginine transaminase (ATA) pathway in response to exogeneous L-arginine. Regulates transcription of aruH and aruI. In Pseudomonas aeruginosa (strain ATCC 15692 / DSM 22644 / CIP 104116 / JCM 14847 / LMG 12228 / 1C / PRS 101 / PAO1), this protein is Transcriptional regulatory protein AruR (aruR).